The following is a 98-amino-acid chain: NADH-ubiquinone oxidoreductase chain 4L (98 aa).

Helical transmembrane passes span 2–22 (PSIS…MLIF), 29–49 (SLLC…LTIL), and 61–81 (ILLL…LVTV).

This sequence belongs to the complex I subunit 4L family. As to quaternary structure, core subunit of respiratory chain NADH dehydrogenase (Complex I) which is composed of 45 different subunits.

Its subcellular location is the mitochondrion inner membrane. It carries out the reaction a ubiquinone + NADH + 5 H(+)(in) = a ubiquinol + NAD(+) + 4 H(+)(out). In terms of biological role, core subunit of the mitochondrial membrane respiratory chain NADH dehydrogenase (Complex I) which catalyzes electron transfer from NADH through the respiratory chain, using ubiquinone as an electron acceptor. Part of the enzyme membrane arm which is embedded in the lipid bilayer and involved in proton translocation. The polypeptide is NADH-ubiquinone oxidoreductase chain 4L (MT-ND4L) (Eulemur mongoz (Mongoose lemur)).